The chain runs to 137 residues: Nucleoside diphosphate kinase (137 aa).

ATP contacts are provided by Lys-9, Phe-57, Arg-85, Thr-91, Arg-102, and Asn-112. His-115 functions as the Pros-phosphohistidine intermediate in the catalytic mechanism.

This sequence belongs to the NDK family. In terms of assembly, homotetramer. Mg(2+) serves as cofactor.

It is found in the cytoplasm. It carries out the reaction a 2'-deoxyribonucleoside 5'-diphosphate + ATP = a 2'-deoxyribonucleoside 5'-triphosphate + ADP. The enzyme catalyses a ribonucleoside 5'-diphosphate + ATP = a ribonucleoside 5'-triphosphate + ADP. Its function is as follows. Major role in the synthesis of nucleoside triphosphates other than ATP. The ATP gamma phosphate is transferred to the NDP beta phosphate via a ping-pong mechanism, using a phosphorylated active-site intermediate. The protein is Nucleoside diphosphate kinase of Leptospira borgpetersenii serovar Hardjo-bovis (strain L550).